Here is a 295-residue protein sequence, read N- to C-terminus: tRNA dimethylallyltransferase (295 aa).

11–18 (GPTVSGKS) lines the ATP pocket. Substrate is bound at residue 13-18 (TVSGKS). Interaction with substrate tRNA stretches follow at residues 36 to 39 (DSMQ) and 158 to 162 (QRIIR).

It belongs to the IPP transferase family. Monomer. The cofactor is Mg(2+).

The enzyme catalyses adenosine(37) in tRNA + dimethylallyl diphosphate = N(6)-dimethylallyladenosine(37) in tRNA + diphosphate. In terms of biological role, catalyzes the transfer of a dimethylallyl group onto the adenine at position 37 in tRNAs that read codons beginning with uridine, leading to the formation of N6-(dimethylallyl)adenosine (i(6)A). This chain is tRNA dimethylallyltransferase, found in Bartonella quintana (strain Toulouse) (Rochalimaea quintana).